The primary structure comprises 241 residues: uncharacterized protein (241 aa).

This is an uncharacterized protein from Pasteurella multocida (strain Pm70).